The following is a 703-amino-acid chain: Bifunctional arginine dihydrolase/ornithine cyclodeaminase AgrE (703 aa).

The tract at residues 10–269 is arginine dihydrolase; that stretch reads CPPDHYDVDY…GAAKCLTLRV (260 aa). Residues Asn-22, Asp-65, Asn-71, Arg-90, and Arg-139 each contribute to the L-arginine site. Asn-22 contacts L-ornithine. Residues Arg-90, Arg-139, and His-168 each coordinate L-ornithine. The active-site Proton donor/acceptor is the His-168. L-arginine is bound by residues Asp-170 and Ala-258. Cys-264 contributes to the L-ornithine binding site. The active-site Nucleophile is the Cys-264. Positions 285-694 are ornithine cyclodeaminase; the sequence is SRIIRIEGHL…SLLTQQLDKL (410 aa). NAD(+) contacts are provided by Asn-524, Ala-525, Asp-603, Ser-635, Met-636, Leu-637, His-638, Asp-656, Asp-679, and Val-680.

The protein in the N-terminal section; belongs to the DDAH family. It in the C-terminal section; belongs to the AgrE/ArgZ ornithine cyclodeaminase family. As to quaternary structure, homotetramer. It depends on NAD(+) as a cofactor.

The enzyme catalyses L-arginine + 2 H2O + 2 H(+) = L-ornithine + 2 NH4(+) + CO2. It catalyses the reaction L-ornithine = L-proline + NH4(+). With respect to regulation, ornithine cyclodeaminase activity is inhibited by ATP. In terms of biological role, bifunctional enzyme involved in a cyanobacterial arginine utilization pathway that produces glutamate and enables cellular adaptation to nitrogen fluctuations. Catalyzes the hydrolysis of arginine to ornithine, with the release of ammonia and carbon dioxide. Then, catalyzes the conversion of ornithine to proline, with the release of ammonia. In Nostoc sp. (strain PCC 7120 / SAG 25.82 / UTEX 2576), this protein is Bifunctional arginine dihydrolase/ornithine cyclodeaminase AgrE.